The chain runs to 122 residues: Large ribosomal subunit protein uL22 (122 aa).

Residues 103–122 (VEGKEMKSSKSHKKNQAEGK) are disordered.

This sequence belongs to the universal ribosomal protein uL22 family. Part of the 50S ribosomal subunit.

In terms of biological role, this protein binds specifically to 23S rRNA; its binding is stimulated by other ribosomal proteins, e.g. L4, L17, and L20. It is important during the early stages of 50S assembly. It makes multiple contacts with different domains of the 23S rRNA in the assembled 50S subunit and ribosome. Functionally, the globular domain of the protein is located near the polypeptide exit tunnel on the outside of the subunit, while an extended beta-hairpin is found that lines the wall of the exit tunnel in the center of the 70S ribosome. The protein is Large ribosomal subunit protein uL22 of Helicobacter pylori (strain P12).